A 179-amino-acid chain; its full sequence is Apoptosis regulator Bcl-2 homolog (179 aa).

Positions 76–95 (ELFKDLINWGRICGFIVFSA) match the BH1 motif. A BH2 motif is present at residues 126 to 141 (PWMISHGGQEEFLAFS).

This sequence belongs to the Bcl-2 family. In terms of assembly, interacts with host BECN1 (via BH3 homology domain); this interaction allows the virus to inhibit BECN1, and thus autophagy. Interacts with host BID. Interacts with host BAX.

It is found in the host mitochondrion. Its subcellular location is the host endoplasmic reticulum. Functionally, suppresses apoptosis in host cell to promote the viral replication. Has the ability to potentially bind to all the members of the proapoptotic Bcl-2 family. Inhibits autophagy by interacting with host Beclin 1 (BECN1). The protein is Apoptosis regulator Bcl-2 homolog of African swine fever virus (isolate Tick/South Africa/Pretoriuskop Pr4/1996) (ASFV).